Here is a 613-residue protein sequence, read N- to C-terminus: 4-hydroxy-3-methylbut-2-en-1-yl diphosphate synthase (flavodoxin) (613 aa).

[4Fe-4S] cluster-binding residues include C514, C517, C548, and E555.

This sequence belongs to the IspG family. The cofactor is [4Fe-4S] cluster.

The catalysed reaction is (2E)-4-hydroxy-3-methylbut-2-enyl diphosphate + oxidized [flavodoxin] + H2O + 2 H(+) = 2-C-methyl-D-erythritol 2,4-cyclic diphosphate + reduced [flavodoxin]. It functions in the pathway isoprenoid biosynthesis; isopentenyl diphosphate biosynthesis via DXP pathway; isopentenyl diphosphate from 1-deoxy-D-xylulose 5-phosphate: step 5/6. Converts 2C-methyl-D-erythritol 2,4-cyclodiphosphate (ME-2,4cPP) into 1-hydroxy-2-methyl-2-(E)-butenyl 4-diphosphate. This is 4-hydroxy-3-methylbut-2-en-1-yl diphosphate synthase (flavodoxin) from Chlamydia pneumoniae (Chlamydophila pneumoniae).